A 509-amino-acid polypeptide reads, in one-letter code: Maturase K (509 aa).

Belongs to the intron maturase 2 family. MatK subfamily.

The protein resides in the plastid. It is found in the chloroplast. Its function is as follows. Usually encoded in the trnK tRNA gene intron. Probably assists in splicing its own and other chloroplast group II introns. The sequence is that of Maturase K from Drimys granadensis.